The chain runs to 156 residues: MLRQFIISTVGRRQPLLMILQSRLASNLDKTEYTTPGEIVDYDDPPHLPVPEYPVRPDEPLETRKQRLLYQSRKRGMLENDLLLSTFVAKYLKDFSAEQTAEYDQLINGVSNDWDIFYWATDTKPTPPQFDTEIMRLLKEHVKNHEKVQRIRQPDL.

The transit peptide at 1–24 directs the protein to the mitochondrion; it reads MLRQFIISTVGRRQPLLMILQSRL.

Belongs to the SDHAF2 family. As to quaternary structure, interacts with the flavoprotein subunit within the SDH catalytic dimer.

Its subcellular location is the mitochondrion matrix. Functionally, plays an essential role in the assembly of succinate dehydrogenase (SDH), an enzyme complex (also referred to as respiratory complex II) that is a component of both the tricarboxylic acid (TCA) cycle and the mitochondrial electron transport chain, and which couples the oxidation of succinate to fumarate with the reduction of ubiquinone (coenzyme Q) to ubiquinol. Required for flavinylation (covalent attachment of FAD) of the flavoprotein subunit of the SDH catalytic dimer. The chain is Succinate dehydrogenase assembly factor 2-B, mitochondrial from Drosophila yakuba (Fruit fly).